A 177-amino-acid chain; its full sequence is ATP-dependent protease subunit HslV (177 aa).

Residue T2 is part of the active site. The Na(+) site is built by G158, C161, and T164.

The protein belongs to the peptidase T1B family. HslV subfamily. In terms of assembly, a double ring-shaped homohexamer of HslV is capped on each side by a ring-shaped HslU homohexamer. The assembly of the HslU/HslV complex is dependent on binding of ATP.

The protein resides in the cytoplasm. The enzyme catalyses ATP-dependent cleavage of peptide bonds with broad specificity.. Allosterically activated by HslU binding. In terms of biological role, protease subunit of a proteasome-like degradation complex believed to be a general protein degrading machinery. This is ATP-dependent protease subunit HslV from Pseudomonas aeruginosa (strain LESB58).